Here is a 156-residue protein sequence, read N- to C-terminus: ATP synthase subunit b (156 aa).

The helical transmembrane segment at 12–32 (VAFLIFVLFCMKYVWPPVITA) threads the bilayer.

Belongs to the ATPase B chain family. As to quaternary structure, F-type ATPases have 2 components, F(1) - the catalytic core - and F(0) - the membrane proton channel. F(1) has five subunits: alpha(3), beta(3), gamma(1), delta(1), epsilon(1). F(0) has three main subunits: a(1), b(2) and c(10-14). The alpha and beta chains form an alternating ring which encloses part of the gamma chain. F(1) is attached to F(0) by a central stalk formed by the gamma and epsilon chains, while a peripheral stalk is formed by the delta and b chains.

Its subcellular location is the cell inner membrane. Its function is as follows. F(1)F(0) ATP synthase produces ATP from ADP in the presence of a proton or sodium gradient. F-type ATPases consist of two structural domains, F(1) containing the extramembraneous catalytic core and F(0) containing the membrane proton channel, linked together by a central stalk and a peripheral stalk. During catalysis, ATP synthesis in the catalytic domain of F(1) is coupled via a rotary mechanism of the central stalk subunits to proton translocation. In terms of biological role, component of the F(0) channel, it forms part of the peripheral stalk, linking F(1) to F(0). In Pseudomonas putida (strain ATCC 700007 / DSM 6899 / JCM 31910 / BCRC 17059 / LMG 24140 / F1), this protein is ATP synthase subunit b.